Reading from the N-terminus, the 330-residue chain is Phosphate acyltransferase (330 aa).

This sequence belongs to the PlsX family. Homodimer. Probably interacts with PlsY.

It localises to the cytoplasm. It carries out the reaction a fatty acyl-[ACP] + phosphate = an acyl phosphate + holo-[ACP]. Its pathway is lipid metabolism; phospholipid metabolism. Its function is as follows. Catalyzes the reversible formation of acyl-phosphate (acyl-PO(4)) from acyl-[acyl-carrier-protein] (acyl-ACP). This enzyme utilizes acyl-ACP as fatty acyl donor, but not acyl-CoA. This Bacillus cytotoxicus (strain DSM 22905 / CIP 110041 / 391-98 / NVH 391-98) protein is Phosphate acyltransferase.